The following is a 247-amino-acid chain: ATP synthase subunit a, chloroplastic (247 aa).

A run of 5 helical transmembrane segments spans residues 38 to 58 (QVLI…TIAV), 95 to 115 (VPFI…GALL), 134 to 154 (INTT…AGLT), 199 to 219 (LVVV…VMFL), and 220 to 240 (GLFT…AYIG).

The protein belongs to the ATPase A chain family. In terms of assembly, F-type ATPases have 2 components, CF(1) - the catalytic core - and CF(0) - the membrane proton channel. CF(1) has five subunits: alpha(3), beta(3), gamma(1), delta(1), epsilon(1). CF(0) has four main subunits: a, b, b' and c.

It is found in the plastid. The protein localises to the chloroplast thylakoid membrane. In terms of biological role, key component of the proton channel; it plays a direct role in the translocation of protons across the membrane. In Panax ginseng (Korean ginseng), this protein is ATP synthase subunit a, chloroplastic.